The chain runs to 236 residues: Sperm flagellar protein 1 (236 aa).

The Calponin-homology (CH) domain maps to 7–112 (EEALHQLYLW…VLIPLRQRLE (106 aa)). A disordered region spans residues 118–177 (RKQGIGSLQELAPQDGTDYMDVGLSQKARGEGVPDPQGRGQLREGRLPVPRPPGDSQALQ). An essential for homodimerization and microtubule bundling activity region spans residues 183–236 (ILQIAEKEQELLASQETVQVLQMKVRRLEHLLQLKNVRIEDLSRRLQQAERKQR).

As to quaternary structure, homodimer. Interacts with actin, TJP1, CGN and CDH1.

The protein localises to the cytoplasm. The protein resides in the cell projection. Its subcellular location is the cilium. It is found in the flagellum. It localises to the cytoskeleton. The protein localises to the cilium axoneme. The protein resides in the apical cell membrane. Its subcellular location is the basolateral cell membrane. It is found in the stress fiber. It localises to the microvillus. The protein localises to the lamellipodium. The protein resides in the filopodium. Its function is as follows. Microtubule-associated protein involved in the stabilization of microtubules along the axis of migration during radial intercalation. Promotes the establishment and stabilization of an axis of microtubules required for the active migration of cells into the outer epithelium. Microtubule-associated protein that promotes microtubule bundling and stabilizes microtubules against depolymerization in response to cold shock. Essential for ciliary central apparatus formation which requires both its microtubule-binding and bundling activities and for ciliary localization of HYDIN and SPAG6 in ependymal cilia. Binds actin in intestinal epithelial cells (IECs), essential for IECs survival and contributes to formation of filopodia and lamellipodia in migrating IECs. Regulates planar cell polarity signaling pathway and asymmetric microtubule accumulation in ciliated epithelia. The protein is Sperm flagellar protein 1 (SPEF1) of Bos taurus (Bovine).